Consider the following 269-residue polypeptide: MKITSISVQQKNKERYNIFIDEKYNFSVDEEVLARFQLMKGKVLTEAEIEEIKQADMVRKGLNKAINFLSHRVRSEKEIRDYLKKQEMEPFAIDEILKKLADMDYINDVEFAELYTKTQIKTTLKGPRTIERELVEKGLTREIISQVIEEYSDENQLENATKQAMKIMKRNNKSAKKMLQQKITTDLIQKGYSSEVAKAASLEATNELDMADEADILQKQIEKTMRKNKRYKPSVAKQKTITSLMQKGFSYDTIQSYLTENEISFEEEE.

Belongs to the RecX family.

The protein localises to the cytoplasm. In terms of biological role, modulates RecA activity. In Listeria welshimeri serovar 6b (strain ATCC 35897 / DSM 20650 / CCUG 15529 / CIP 8149 / NCTC 11857 / SLCC 5334 / V8), this protein is Regulatory protein RecX.